The following is a 938-amino-acid chain: Glutamate receptor ionotropic, NMDA 1 (938 aa).

The signal sequence occupies residues 1 to 18 (MSTMHLLTFALLFSCSFA). The Extracellular segment spans residues 19–559 (RAACDPKIVN…TLDSFMQPFQ (541 aa)). N-linked (GlcNAc...) asparagine glycosylation is found at Asn61, Asn203, Asn239, Asn276, Asn300, Asn350, Asn368, Asn440, Asn471, and Asn491. A disulfide bond links Cys79 and Cys308. Cystine bridges form between Cys420/Cys454 and Cys436/Cys455. Pro516, Thr518, and Arg523 together coordinate glycine. A helical transmembrane segment spans residues 560-580 (STLWLLVGLSVHVVAVMLYLL). Over 581–602 (DRFSPFGRFKVNSEEEEEDALT) the chain is Cytoplasmic. An intramembrane region (discontinuously helical) is located at residues 603 to 624 (LSSAMWFSWGVLLNSGIGEGAP). The tract at residues 603-624 (LSSAMWFSWGVLLNSGIGEGAP) is pore-forming. Residues 625–630 (RSFSAR) lie on the Cytoplasmic side of the membrane. The helical transmembrane segment at 631-647 (ILGMVWAGFAMIIVASY) threads the bilayer. Residues 648–812 (TANLAAFLVL…NAPATLTFEN (165 aa)) are Extracellular-facing. N-linked (GlcNAc...) asparagine glycosylation is present at Asn674. Positions 688 and 732 each coordinate glycine. An intrachain disulfide couples Cys744 to Cys798. Asn771 is a glycosylation site (N-linked (GlcNAc...) asparagine). A helical transmembrane segment spans residues 813–833 (MAGVFMLVAGGIVAGIFLIFI). Over 834-938 (EIAYKRHKDA…LQLCSRHRES (105 aa)) the chain is Cytoplasmic. Ser889 is modified (phosphoserine; by PKC). The segment at 889-938 (SSFKRRRSSKDTSTGGGRGALQNQKDTVLPRRAIEREEGQLQLCSRHRES) is disordered. At Ser890 the chain carries Phosphoserine. Phosphoserine; by PKC is present on residues Ser896 and Ser897. A compositionally biased stretch (basic and acidic residues) spans 916-927 (VLPRRAIEREEG).

Belongs to the glutamate-gated ion channel (TC 1.A.10.1) family. NR1/GRIN1 subfamily. Heterotetramer; the NMDAR subunits are modular and harbor tiered domains that function in concert to regulate opening and closing of the cation-selective ion channel pore. Forms heterotetrameric channels composed of two GluN1/zeta subunits (GRIN1), and two identical GluN2/epsilon subunits (GRIN2A, GRIN2B, GRIN2C or GRIN2D) or GluN3 subunits (GRIN3A or GRIN3B) (in vitro). Can also form heterotetrameric channels that contain at least two GluN1 subunits and at least two different GluN2 subunits (or a combination of one GluN2 and one GluN3 subunits) (in vitro). In vivo, the subunit composition may vary in function of the expression levels of the different subunits. Found in a complex with GRIN2A or GRIN2B, GRIN3A and PPP2CB. Found in a complex with GRIN2A or GRIN2B and GRIN3B. Interacts with SNX27 (via PDZ domain); the interaction is required for recycling to the plasma membrane when endocytosed and prevent degradation in lysosomes. Interacts with DLG4 and MPDZ. Interacts with LRFN1 and LRFN2. Interacts with MYZAP. Found in a complex with DLG4 and PRR7. Found in a complex with GRIN2B and PRR7. Interacts with PRR7; the interaction is reduced following NMDA receptor activity. NMDA is probably regulated by C-terminal phosphorylation of an isoform of GRIN1 by PKC. Dephosphorylated on Ser-897 probably by protein phosphatase 2A (PPP2CB). Its phosphorylated state is influenced by the formation of the NMDAR-PPP2CB complex and the NMDAR channel activity. As to expression, detected in brain (at protein level). Detected in brain.

The protein resides in the cell membrane. It localises to the postsynaptic cell membrane. It is found in the postsynaptic density membrane. The protein localises to the synaptic cell membrane. It catalyses the reaction Ca(2+)(in) = Ca(2+)(out). It carries out the reaction Na(+)(in) = Na(+)(out). The catalysed reaction is K(+)(in) = K(+)(out). Component of N-methyl-D-aspartate (NMDA) receptors (NMDARs) that function as heterotetrameric, ligand-gated cation channels with high calcium permeability and voltage-dependent block by Mg(2+). NMDARs participate in synaptic plasticity for learning and memory formation by contributing to the long-term potentiation (LTP). Channel activation requires binding of the neurotransmitter L-glutamate to the GluN2 subunit, glycine or D-serine binding to the GluN1 subunit, plus membrane depolarization to eliminate channel inhibition by Mg(2+). NMDARs mediate simultaneously the potasium efflux and the influx of calcium and sodium. Each GluN2 or GluN3 subunit confers differential attributes to channel properties, including activation, deactivation and desensitization kinetics, pH sensitivity, Ca2(+) permeability, and binding to allosteric modulators. This is Glutamate receptor ionotropic, NMDA 1 from Mus musculus (Mouse).